A 375-amino-acid chain; its full sequence is uncharacterized protein (375 aa).

The next 7 membrane-spanning stretches (helical) occupy residues 21 to 41 (LLLL…IVLF), 66 to 86 (IIVF…FCVS), 160 to 180 (LVGV…PGIV), 203 to 223 (LVGL…HLLI), 234 to 254 (FYMV…FHLF), 289 to 309 (VISF…YFLI), and 338 to 358 (FFLM…MLFF).

The protein localises to the cell membrane. This is an uncharacterized protein from Mycoplasma genitalium (strain ATCC 33530 / DSM 19775 / NCTC 10195 / G37) (Mycoplasmoides genitalium).